A 239-amino-acid chain; its full sequence is Putative ABC transporter ATP-binding protein AlbC (239 aa).

The region spanning 4-238 (LDIHDVSVWY…RREFFEVIGH (235 aa)) is the ABC transporter domain. An ATP-binding site is contributed by 37–44 (GVNGAGKT).

The protein belongs to the ABC transporter superfamily.

Involved in the production of the bacteriocin subtilosin. Required for immunity to subtilosin. The sequence is that of Putative ABC transporter ATP-binding protein AlbC (albC) from Bacillus subtilis (strain 168).